The following is a 275-amino-acid chain: Bis(5'-nucleosyl)-tetraphosphatase, symmetrical (275 aa).

It belongs to the Ap4A hydrolase family.

The enzyme catalyses P(1),P(4)-bis(5'-adenosyl) tetraphosphate + H2O = 2 ADP + 2 H(+). In terms of biological role, hydrolyzes diadenosine 5',5'''-P1,P4-tetraphosphate to yield ADP. This is Bis(5'-nucleosyl)-tetraphosphatase, symmetrical from Haemophilus influenzae (strain PittGG).